We begin with the raw amino-acid sequence, 144 residues long: MNRTILVPIDISDSELTQRVISHVEAEAKIDDAEVHFLTVIPSLPYYASLGLAYSAELPAMDDLKAEAKSQLEEIIKKFKLPTDRVHVHVEEGSPKDRILELAKKIPAHMIIIASHRPDITTYLLGSNAAAVVRHAECSVLVVR.

The protein belongs to the universal stress protein A family. Homodimer.

This is Universal stress protein F (uspF) from Escherichia coli O157:H7.